A 304-amino-acid chain; its full sequence is MAATLRELRGRIRSAGSIKKITKAQELIATSRIGRAQARLDSARPYAFQITAMLTTLAAEAALDHPLLVERPEPKRAGVLVVSSDRGLCGAYNASIFRRAEELFSLLREQGKTPVLYSVGRKALNYYTFRNWDISGSWTGFSEQPQYENAAEIAETLVESFMRGTGGEDEGESDAESVDELHIVYTEFKSMLSQSAVAHRIAPMVVEYVEEPPEVRTLYSFEPDATTLFESLLPRYLTTRVYAALLESAASELASRQRAMKSATDNADDLIKALTLMANRERQAQITQEISEIVGGANALADAR.

The protein belongs to the ATPase gamma chain family. As to quaternary structure, F-type ATPases have 2 components, CF(1) - the catalytic core - and CF(0) - the membrane proton channel. CF(1) has five subunits: alpha(3), beta(3), gamma(1), delta(1), epsilon(1). CF(0) has three main subunits: a, b and c.

Its subcellular location is the cell membrane. Functionally, produces ATP from ADP in the presence of a proton gradient across the membrane. The gamma chain is believed to be important in regulating ATPase activity and the flow of protons through the CF(0) complex. The polypeptide is ATP synthase gamma chain (Mycolicibacterium paratuberculosis (strain ATCC BAA-968 / K-10) (Mycobacterium paratuberculosis)).